Here is a 61-residue protein sequence, read N- to C-terminus: Photosystem II reaction center protein K (61 aa).

Positions 1–24 are excised as a propeptide; that stretch reads MLNIFSLMYICLNSALYSSSFLFA. A helical membrane pass occupies residues 40-60; the sequence is MPVIPVLFFLLAFVWQAAVSF.

The protein belongs to the PsbK family. In terms of assembly, PSII is composed of 1 copy each of membrane proteins PsbA, PsbB, PsbC, PsbD, PsbE, PsbF, PsbH, PsbI, PsbJ, PsbK, PsbL, PsbM, PsbT, PsbX, PsbY, PsbZ, Psb30/Ycf12, at least 3 peripheral proteins of the oxygen-evolving complex and a large number of cofactors. It forms dimeric complexes.

It is found in the plastid. Its subcellular location is the chloroplast thylakoid membrane. In terms of biological role, one of the components of the core complex of photosystem II (PSII). PSII is a light-driven water:plastoquinone oxidoreductase that uses light energy to abstract electrons from H(2)O, generating O(2) and a proton gradient subsequently used for ATP formation. It consists of a core antenna complex that captures photons, and an electron transfer chain that converts photonic excitation into a charge separation. The polypeptide is Photosystem II reaction center protein K (Citrus sinensis (Sweet orange)).